We begin with the raw amino-acid sequence, 857 residues long: Autoinducer 2 sensor kinase/phosphatase LuxQ (857 aa).

A run of 2 helical transmembrane segments spans residues 20–40 (IIFLVLGLITIGIFIQSYYFS) and 283–303 (LGLATSVVLMLMLSLAIRSWI). The Histidine kinase domain maps to 490–712 (KMSHEIRTPL…TFYLSIPVEK (223 aa)). Residue histidine 493 is modified to Phosphohistidine; by autocatalysis. The 116-residue stretch at 735–850 (KVLLVEDNHT…ELHDELLHFK (116 aa)) folds into the Response regulatory domain. Aspartate 784 is subject to 4-aspartylphosphate.

In terms of assembly, binds the complex formed by the autoinducer and LuxP.

It is found in the cell inner membrane. It catalyses the reaction ATP + protein L-histidine = ADP + protein N-phospho-L-histidine.. Its function is as follows. At low cell density, in absence of autoinducer has a kinase activity, and autophosphorylates on a histidine residue. The phosphoryl group is then transferred to an aspartate residue in the response regulator domain. The phosphoryl group is transferred to LuxU, and ultimately to LuxO. At high cell density, in the presence of autoinducer, the kinase activity is inactivated, and the response regulator domain has a phosphatase activity. In Vibrio vulnificus (strain CMCP6), this protein is Autoinducer 2 sensor kinase/phosphatase LuxQ (luxQ).